The following is a 133-amino-acid chain: Fatty acid-binding protein, heart (133 aa).

At Ala2 the chain carries N-acetylalanine. Thr8 carries the post-translational modification Phosphothreonine. Phosphotyrosine; by Tyr-kinases is present on Tyr20. At Ser23 the chain carries Phosphoserine. Thr30 carries the post-translational modification Phosphothreonine. Ser83 carries the phosphoserine modification. 127 to 129 (RTY) provides a ligand contact to (9Z)-octadecenoate. 127–129 (RTY) is a binding site for hexadecanoate. Residue 127–129 (RTY) participates in octadecanoate binding.

In terms of tissue distribution, heart, but also skeletal muscle, kidney, brain and mammary gland.

It localises to the cytoplasm. FABPs are thought to play a role in the intracellular transport of long-chain fatty acids and their acyl-CoA esters. This is Fatty acid-binding protein, heart (Fabp3) from Rattus norvegicus (Rat).